Reading from the N-terminus, the 463-residue chain is Glutamate--tRNA ligase 2 (463 aa).

Residues 10–20 (PSPTGFLHIGS) carry the 'HIGH' region motif. The 'KMSKS' region signature appears at 239-243 (KLSKR). ATP is bound at residue lysine 242.

Belongs to the class-I aminoacyl-tRNA synthetase family. Glutamate--tRNA ligase type 1 subfamily. As to quaternary structure, monomer.

It is found in the cytoplasm. It carries out the reaction tRNA(Glu) + L-glutamate + ATP = L-glutamyl-tRNA(Glu) + AMP + diphosphate. Its function is as follows. Catalyzes the attachment of glutamate to tRNA(Glu) in a two-step reaction: glutamate is first activated by ATP to form Glu-AMP and then transferred to the acceptor end of tRNA(Glu). The protein is Glutamate--tRNA ligase 2 of Rickettsia felis (strain ATCC VR-1525 / URRWXCal2) (Rickettsia azadi).